The primary structure comprises 1132 residues: Protein sel-1 homolog 3 (1132 aa).

Residues M1–G24 are disordered. N-linked (GlcNAc...) asparagine glycans are attached at residues N201, N382, and N527. 7 Sel1-like repeats span residues Y575–S609, N611–T647, R694–I730, D732–N767, G768–Y800, N801–L839, and W840–V877. S608 is modified (phosphoserine). The N-linked (GlcNAc...) asparagine glycan is linked to N937. A Sel1-like 8 repeat occupies K952–F988. The chain crosses the membrane as a helical span at residues I1057–W1077. The interval A1087 to G1132 is disordered. Low complexity predominate over residues A1097–A1116. The segment covering Q1119–G1132 has biased composition (polar residues).

It localises to the membrane. In Homo sapiens (Human), this protein is Protein sel-1 homolog 3 (SEL1L3).